The sequence spans 117 residues: Biofilm growth-associated repressor (117 aa).

One can recognise an HTH arsR-type domain in the interval 20–114; sequence AMEKRATEVA…ALYAIFCAPE (95 aa). The segment at residues 54-77 is a DNA-binding region (H-T-H motif); that stretch reads VGELEAKLDIRQPTLSQQLGVLRE.

Functionally, represses an operon that comprises at least itself and blh. Binds to a palindromic AT-rich sequence spanning the -10 region of the blh promoter and blocks transcription of the operon. In Agrobacterium fabrum (strain C58 / ATCC 33970) (Agrobacterium tumefaciens (strain C58)), this protein is Biofilm growth-associated repressor (bigR).